The chain runs to 239 residues: Phospholipase A2 (239 aa).

A signal peptide spans M1–S19. Positions M20 to E105 are excised as a propeptide. Positions 113, 115, and 117 each coordinate Ca(2+). 5 cysteine pairs are disulfide-bonded: C114–C136, C135–C174, C142–C167, C165–C202, and C207–C217. H139 is an active-site residue. D140 lines the Ca(2+) pocket. A propeptide spanning residues R211–P213 is cleaved from the precursor.

It belongs to the phospholipase A2 family. Group III subfamily. As to quaternary structure, heterodimer composed of a small subunit and a large subunit; disulfid-linked. It depends on Ca(2+) as a cofactor. Expressed by the venom gland.

It is found in the secreted. The enzyme catalyses a 1,2-diacyl-sn-glycero-3-phosphocholine + H2O = a 1-acyl-sn-glycero-3-phosphocholine + a fatty acid + H(+). Functionally, toxic phospholipase A2, which may catalyze the calcium-dependent hydrolysis of the 2-acyl groups in 3-sn-phosphoglycerides. Inhibits both skeletal (RYR1) and cardiac (RYR2) ryanodine receptors (calcium release channels). Probably blocks ryanodine receptors by generating a lipid product. The polypeptide is Phospholipase A2 (Hoffmannihadrurus gertschi (Scorpion)).